The chain runs to 91 residues: Acyl-CoA-binding domain-containing protein 1 (91 aa).

Residues 3-88 enclose the ACB domain; that stretch reads LQEDFEQYAE…VKQLLEEAAA (86 aa). Residues Lys-15, 30-34, Lys-56, and Tyr-75 each bind an acyl-CoA; that span reads YGLYK.

It belongs to the ACBP family. In terms of tissue distribution, highly expressed in leaves. Expressed at low levels in roots and seeds.

It localises to the cytoplasm. Its subcellular location is the cytosol. Its function is as follows. Binds medium- and long-chain acyl-CoA esters with high affinity. Can interact in vitro with palmitoyl-CoA, oleoyl-CoA, linoleoyl-CoA and linolenoyl-CoA. Binds phosphatidic acid (PA) and phosphatidylcholine (PC) in vitro. May play a role in the biosynthesis of phospholipids. The protein is Acyl-CoA-binding domain-containing protein 1 of Oryza sativa subsp. japonica (Rice).